Consider the following 443-residue polypeptide: Xaa-Pro dipeptidase (443 aa).

Aspartate 246, aspartate 257, histidine 339, glutamate 384, and glutamate 423 together coordinate Mn(2+).

It belongs to the peptidase M24B family. Bacterial-type prolidase subfamily. Mn(2+) serves as cofactor.

It carries out the reaction Xaa-L-Pro dipeptide + H2O = an L-alpha-amino acid + L-proline. Splits dipeptides with a prolyl residue in the C-terminal position. This chain is Xaa-Pro dipeptidase, found in Klebsiella pneumoniae (strain 342).